The chain runs to 146 residues: Hemoglobin subunit beta (146 aa).

Val-1 is modified (N-acetylvaline). A Globin domain is found at 2 to 146 (HLSGEEKAAV…VANALAHKYH (145 aa)). The residue at position 12 (Thr-12) is a Phosphothreonine. Ser-44 carries the post-translational modification Phosphoserine. N6-acetyllysine is present on Lys-59. His-63 lines the heme b pocket. Residue Lys-82 is modified to N6-acetyllysine. Residue His-92 coordinates heme b. Cys-93 bears the S-nitrosocysteine mark. Lys-144 is subject to N6-acetyllysine.

This sequence belongs to the globin family. Heterotetramer of two alpha chains and two beta chains. In terms of tissue distribution, red blood cells.

In terms of biological role, involved in oxygen transport from the lung to the various peripheral tissues. The sequence is that of Hemoglobin subunit beta (HBB) from Pteropus alecto (Black flying fox).